An 877-amino-acid chain; its full sequence is Mediator of RNA polymerase II transcription subunit 16 (877 aa).

9 WD repeats span residues 21-71, 72-119, 120-165, 166-203, 204-257, 258-334, 335-415, 416-460, and 461-495; these read WEKW…EHPW, DLHS…NSWE, SSVG…VKFS, PSLT…LTST, ESLC…RIDT, EILP…DKQP, TILK…RPVD, EPAM…LSPS, and MGHP…LLHV. The interval 848–877 is disordered; sequence PAFVQLGPQSTHHSPRTPRSLDHLHPEDRP. Basic and acidic residues predominate over residues 866-877; sequence RSLDHLHPEDRP.

The protein belongs to the Mediator complex subunit 16 family. As to quaternary structure, component of the Mediator complex, which is composed of MED1, MED4, MED6, MED7, MED8, MED9, MED10, MED11, MED12, MED13, MED13L, MED14, MED15, MED16, MED17, MED18, MED19, MED20, MED21, MED22, MED23, MED24, MED25, MED26, MED27, MED29, MED30, MED31, CCNC, CDK8 and CDC2L6/CDK11. The MED12, MED13, CCNC and CDK8 subunits form a distinct module termed the CDK8 module. Mediator containing the CDK8 module is less active than Mediator lacking this module in supporting transcriptional activation. Individual preparations of the Mediator complex lacking one or more distinct subunits have been variously termed ARC, CRSP, DRIP, PC2, SMCC and TRAP.

Its subcellular location is the nucleus. Functionally, component of the Mediator complex, a coactivator involved in the regulated transcription of nearly all RNA polymerase II-dependent genes. Mediator functions as a bridge to convey information from gene-specific regulatory proteins to the basal RNA polymerase II transcription machinery. Mediator is recruited to promoters by direct interactions with regulatory proteins and serves as a scaffold for the assembly of a functional preinitiation complex with RNA polymerase II and the general transcription factors. The polypeptide is Mediator of RNA polymerase II transcription subunit 16 (MED16) (Homo sapiens (Human)).